A 234-amino-acid polypeptide reads, in one-letter code: Ribose-5-phosphate isomerase A (234 aa).

Substrate contacts are provided by residues 35–38 (SGTT), 91–94 (DGAD), and 105–108 (KGGG). Catalysis depends on glutamate 114, which acts as the Proton acceptor. A substrate-binding site is contributed by lysine 132.

The protein belongs to the ribose 5-phosphate isomerase family. In terms of assembly, homodimer.

It catalyses the reaction aldehydo-D-ribose 5-phosphate = D-ribulose 5-phosphate. The protein operates within carbohydrate degradation; pentose phosphate pathway; D-ribose 5-phosphate from D-ribulose 5-phosphate (non-oxidative stage): step 1/1. Catalyzes the reversible conversion of ribose-5-phosphate to ribulose 5-phosphate. In Methanococcus aeolicus (strain ATCC BAA-1280 / DSM 17508 / OCM 812 / Nankai-3), this protein is Ribose-5-phosphate isomerase A.